We begin with the raw amino-acid sequence, 63 residues long: MRGTSFILFAVVVILGFLHANAEPLANPAPLANPDPLANADPLADPEAINLKGLIKKVASLLT.

The first 22 residues, 1–22 (MRGTSFILFAVVVILGFLHANA), serve as a signal peptide directing secretion. 5 AXPX repeats span residues 22–25 (AEPL), 26–29 (ANPA), 32–35 (ANPD), 40–43 (ADPL), and 44–47 (ADPE). Residues 23-48 (EPLANPAPLANPDPLANADPLADPEA) constitute a propeptide that is removed on maturation.

In terms of tissue distribution, expressed by the venom gland.

It is found in the secreted. It localises to the target cell membrane. Antimicrobial peptide with activities against the fungi B.cinerea (MIC=5 uM) and C.albicans (MIC=100 uM), the Gram-negative bacterium E.coli (MIC=25 uM) and the Gram-positive bacterium S.aureus (MIC=100 uM). Shows cytolytic activity against insect cell lines. Has no hemolytic activity against human erythrocytes. In vivo, peptide injection in the vicinity of the head and thorax of lepidopteran larvae induces feeding disorder followed by death due to starvation. The protein is Eumenitin VP1 of Eumenes pomiformis (Potter wasp).